Consider the following 218-residue polypeptide: Tubulin polymerization-promoting protein (218 aa).

The interval 1 to 45 (MADSKAKPTKAANKTPPKSPGDPAKAAKRLSLESEGANEGAAAAP) is disordered. The mediates interaction with LIMK1 stretch occupies residues 2 to 115 (ADSKAKPTKA…SCRTITFEQF (114 aa)). Threonine 15 carries the post-translational modification Phosphothreonine. Phosphoserine is present on residues serine 19, serine 31, and serine 34. The segment covering 33–45 (ESEGANEGAAAAP) has biased composition (low complexity). Histidine 60, histidine 71, cysteine 79, and cysteine 82 together coordinate Zn(2+). A Phosphothreonine modification is found at threonine 91. Serine 106 is modified (phosphoserine). A glycan (O-linked (GlcNAc) serine) is linked at serine 151. Serine 158 and serine 159 each carry phosphoserine. Positions 165-192 (LTDTSKFTGSHKERFDQSGKGKGKAGRV) are disordered. Basic and acidic residues predominate over residues 174-183 (SHKERFDQSG).

The protein belongs to the TPPP family. As to quaternary structure, homodimer. Binds tubulin; binding is inhibited by GTP. Interacts with MAPK1. Interacts with GAPDH; the interaction is direct. Interacts with LIMK1 (via the PDZ domain); the interaction is direct. Interacts with LIMK2. Interacts with HDAC6; thereby inhibiting the tubulin deacetylase activity of HDAC6. Interacts with aggregated SNCA; may have a pro-aggregatory role in synucleinopathies. Interacts with DYNLL1. Interacts (via C-terminus) with S100A2, S100A6 and S100B; these interactions inhibit TPPP dimerization. It depends on Mg(2+) as a cofactor. In terms of processing, phosphorylated by LIMK1 on serine residues; phosphorylation may alter the tubulin polymerization activity. Phosphorylation by LIMK2, but not LIMK1, regulates astral microtubule organization at early stage of mitosis. Phosphorylation by ROCK1 at Ser-31, Ser-106 and Ser-158 inhibits interaction with HDAC6, resulting in decreased acetylation of tubulin, increased cell motility and entry into S-phase. Phosphorylation by CDK1 inhibits the microtubule polymerizing activity. Degraded by the proteasome; zinc-binding inhibits degradation by the proteasome. As to expression, predominantly expressed in mature oligodendrocytes.

The protein localises to the golgi outpost. It localises to the cytoplasm. It is found in the cytoskeleton. The protein resides in the microtubule organizing center. Its subcellular location is the nucleus. The protein localises to the spindle. It catalyses the reaction GTP + H2O = GDP + phosphate + H(+). Its function is as follows. Regulator of microtubule dynamics that plays a key role in myelination by promoting elongation of the myelin sheath. Acts as a microtubule nucleation factor in oligodendrocytes: specifically localizes to the postsynaptic Golgi apparatus region, also named Golgi outpost, and promotes microtubule nucleation, an important step for elongation of the myelin sheath. Required for both uniform polarized growth of distal microtubules as well as directing the branching of proximal processes. Shows magnesium-dependent GTPase activity; the role of the GTPase activity is unclear. In addition to microtubule nucleation activity, also involved in microtubule bundling and stabilization of existing microtubules, thereby maintaining the integrity of the microtubule network. Regulates microtubule dynamics by promoting tubulin acetylation: acts by inhibiting the tubulin deacetylase activity of HDAC6. Also regulates cell migration: phosphorylation by ROCK1 inhibits interaction with HDAC6, resulting in decreased acetylation of tubulin and increased cell motility. Plays a role in cell proliferation by regulating the G1/S-phase transition. Involved in astral microtubule organization and mitotic spindle orientation during early stage of mitosis; this process is regulated by phosphorylation by LIMK2. In Rattus norvegicus (Rat), this protein is Tubulin polymerization-promoting protein.